Here is a 357-residue protein sequence, read N- to C-terminus: Alternative oxidase, mitochondrial (357 aa).

A helical transmembrane segment spans residues 152-172 (LTRCIFLESIAGVPGAVASFI). Residues Glu-159, Glu-198, and His-201 each coordinate Fe cation. Residues 218–238 (IIYVGQGVFCNLFFLFYLANP) form a helical membrane-spanning segment. Fe cation is bound by residues Glu-249, Glu-304, and His-307. The disordered stretch occupies residues 330 to 357 (IPDLKEPQPESGLKVTKPHGWEKEELKL). Basic and acidic residues predominate over residues 348–357 (HGWEKEELKL).

The protein belongs to the alternative oxidase family. The cofactor is Fe cation.

The protein resides in the mitochondrion inner membrane. Its function is as follows. Catalyzes cyanide-resistant oxygen consumption. May increase respiration when the cytochrome respiratory pathway is restricted, or in response to low temperatures. This chain is Alternative oxidase, mitochondrial (STO1), found in Scheffersomyces stipitis (strain ATCC 58785 / CBS 6054 / NBRC 10063 / NRRL Y-11545) (Yeast).